The following is a 441-amino-acid chain: NADH-quinone oxidoreductase subunit D (441 aa).

This sequence belongs to the complex I 49 kDa subunit family. NDH-1 is composed of 14 different subunits. Subunits NuoB, C, D, E, F, and G constitute the peripheral sector of the complex.

The protein resides in the cell membrane. It carries out the reaction a quinone + NADH + 5 H(+)(in) = a quinol + NAD(+) + 4 H(+)(out). In terms of biological role, NDH-1 shuttles electrons from NADH, via FMN and iron-sulfur (Fe-S) centers, to quinones in the respiratory chain. The immediate electron acceptor for the enzyme in this species is believed to be a menaquinone. Couples the redox reaction to proton translocation (for every two electrons transferred, four hydrogen ions are translocated across the cytoplasmic membrane), and thus conserves the redox energy in a proton gradient. This Mycobacterium avium (strain 104) protein is NADH-quinone oxidoreductase subunit D.